The chain runs to 610 residues: Chitinase 63 (610 aa).

Positions 1 to 30 are cleaved as a signal peptide; it reads MRFRHKAAALAATLALPLAGLVGLASPAQA. Positions 31 to 134 constitute a CBM2 domain; that stretch reads ATSATATFQK…KINGGSCDGS (104 aa). Disordered regions lie at residues 125–153 and 208–239; these read KING…ASNI and ARDT…PNPG. The Fibronectin type-III domain occupies 144 to 229; it reads APGTPTASNI…GSVKVTTTGG (86 aa). Residues 213-224 show a composition bias toward polar residues; that stretch reads DQTGPASGSVKV. One can recognise a GH18 domain in the interval 241–610; sequence EVKMGYFTNW…LVSAIDSGLK (370 aa). Residues 313-314 and 340-343 contribute to the chitin site; these read DQ and GGWT. Catalysis depends on Glu383, which acts as the Proton donor. Residues Tyr384, 450–453, and Trp590 each bind chitin; that span reads MTYD.

The protein belongs to the glycosyl hydrolase 18 family. Chitinase class II subfamily.

The catalysed reaction is Random endo-hydrolysis of N-acetyl-beta-D-glucosaminide (1-&gt;4)-beta-linkages in chitin and chitodextrins.. This Streptomyces plicatus protein is Chitinase 63 (chtA).